The following is a 500-amino-acid chain: Aromatic-L-amino-acid decarboxylase (500 aa).

Pro102 provides a ligand contact to L-tryptophan. Residue Ser168 coordinates pyridoxal 5'-phosphate. His203 is an L-tryptophan binding site. Thr262 is a pyridoxal 5'-phosphate binding site. Residue His318 participates in L-tryptophan binding. Lys319 bears the N6-(pyridoxal phosphate)lysine mark. Tyr348 is a binding site for L-tryptophan.

It belongs to the group II decarboxylase family. In terms of assembly, homodimer. The cofactor is pyridoxal 5'-phosphate.

The enzyme catalyses L-tryptophan + H(+) = tryptamine + CO2. The catalysed reaction is 5-hydroxy-L-tryptophan + H(+) = serotonin + CO2. Its function is as follows. Catalyzes the decarboxylation of L-tryptophan to tryptamine and L-5-hydroxytryptophan to serotonin, respectively. The protein is Aromatic-L-amino-acid decarboxylase of Catharanthus roseus (Madagascar periwinkle).